We begin with the raw amino-acid sequence, 320 residues long: Cytochrome f (320 aa).

An N-terminal signal peptide occupies residues 1–35 (MQNRNTFSWVKEQMTRSISVSIIIYVITRTSISNA). Heme-binding residues include Tyr-36, Cys-56, Cys-59, and His-60. Residues 286-306 (VQGLLFFLASIILAQIFLVLK) traverse the membrane as a helical segment.

It belongs to the cytochrome f family. In terms of assembly, the 4 large subunits of the cytochrome b6-f complex are cytochrome b6, subunit IV (17 kDa polypeptide, petD), cytochrome f and the Rieske protein, while the 4 small subunits are PetG, PetL, PetM and PetN. The complex functions as a dimer. The cofactor is heme.

The protein resides in the plastid. It is found in the chloroplast thylakoid membrane. Its function is as follows. Component of the cytochrome b6-f complex, which mediates electron transfer between photosystem II (PSII) and photosystem I (PSI), cyclic electron flow around PSI, and state transitions. The sequence is that of Cytochrome f from Chloranthus spicatus (Chulantree).